The chain runs to 49 residues: Large ribosomal subunit protein bL33A (49 aa).

The protein belongs to the bacterial ribosomal protein bL33 family.

This is Large ribosomal subunit protein bL33A from Lactobacillus johnsonii (strain CNCM I-12250 / La1 / NCC 533).